The chain runs to 156 residues: MDKKVTEVVEAFAQPIVEELNLELVDVEYVKEGQDWFLRVFIDSEKGVDIEECGAVSERLSEALDKEDPIPHLYFLDVSSPGAERPLKKEKDFQQAVGKQVAIKTYEPIDGEKMFEGKMLSYDGTTITLLLTIKTRKKEIQIPMDKVANARLAVTF.

Belongs to the RimP family.

The protein resides in the cytoplasm. Required for maturation of 30S ribosomal subunits. The sequence is that of Ribosome maturation factor RimP from Bacillus thuringiensis (strain Al Hakam).